The sequence spans 138 residues: Salivary protein 15 Iper-3 (138 aa).

Residues 1–21 form the signal peptide; sequence MESFVAMKVVCITVLFVIVAV. N-linked (GlcNAc...) asparagine glycosylation is found at asparagine 30, asparagine 42, asparagine 68, asparagine 107, and asparagine 127. The CD4-binding stretch occupies residues 119 to 138; that stretch reads GPNGQKCANKSQCVGHIPGC.

Belongs to the salp15 family. In terms of assembly, interacts with host CD4. Interacts with host DC-SIGN (CD209). Interacts with Borrelia outer surface protein C (OspC). In terms of tissue distribution, expressed in salivary glands.

Its subcellular location is the secreted. Salivary tick protein that downregulates host immune system by binding to both dendritic cells, and CD4(+) T cells. Specifically binds to the CD4 coreceptor on T cells. This interaction prevents the activation of the Src kinase, Lck, and its downstream substrate Zap-70, and results in deficient activation of PLCgamma1, the repression of calcium fluxes triggered by T-cell antigen receptor (TCR) ligation, and a subsequent reduction in interleukin-2 production. This salivary protein also binds to DC-SIGN (CD209) on dendritic cells (DC) and activates the Raf-1 kinase/MEK signaling pathway that results in down-regulating expression of pro-inflammatory cytokines. Furthermore, it inhibits T cell proliferation induced by DCs. It also inhibits in vitro keratinocyte inflammation induced by Borrelia burgdorferi or by the major outer surface protein (OspC) of Borrelia. In addition, it downregulates chemokines and monocyte chemoattractant protein 1, as well as several antimicrobial peptides such as defensins, cathelicidin, psoriasin, and RNase 7. Apart from its immunomodulatory activities, it is also associated with protection of Borrelia spirochetes from antibody-mediated killing through its binding to OspC. In vivo, tests on different immune disease animal models show promising therapeutic results, e.g., in inhibiting HIV infection, experimental autoimmune encephalomyelitis, transplantation rejection, and asthma. The polypeptide is Salivary protein 15 Iper-3 (Ixodes persulcatus (Taiga tick)).